The chain runs to 502 residues: RxLR effector protein BLN06 (502 aa).

A signal peptide spans 1 to 20 (MTLLHCWLLLVGHLASTAYA). Asn38 carries an N-linked (GlcNAc...) asparagine glycan. Residues 50–53 (LEER) carry the dEER motif.

The protein belongs to the RxLR effector family.

The protein resides in the secreted. It is found in the host cell membrane. Secreted effector that triggers a robust hypersensitive response (HR) in Lactuca serriola LS102. The response to BLN06 was visible as chlorosis but not as strong necrosis. The chain is RxLR effector protein BLN06 from Bremia lactucae (Lettuce downy mildew).